The chain runs to 191 residues: Apoptosis regulator BHRF1 (191 aa).

The interval 1–18 is interaction with host VRK2; that stretch reads MAYSTREILLALCIRDSR. A glycan (N-linked (GlcNAc...) asparagine; by host) is linked at N22. The BH1 signature appears at 89–109; that stretch reads EIFHRGDPSLGRALAWMAWCM. Residues 89 to 142 form an interaction with host VRK2 region; the sequence is EIFHRGDPSLGRALAWMAWCMHACRTLCCNQSTPYYVVDLSVRGMLEASEGLDG. A glycan (N-linked (GlcNAc...) asparagine; by host) is linked at N118. The BH2 signature appears at 142 to 157; it reads GWIHQQGGWSTLIEDN. A helical transmembrane segment spans residues 166-186; sequence WTLFLAGLTLSLLVICSYLFI.

The protein belongs to the Bcl-2 family. In terms of assembly, interacts with isoform 1 of host VRK2; this interaction is involved in protecting cells from apoptosis. Interacts with host PRA1; this interaction seems to modulate BHRF1 anti-apoptotic activity. Interacts with host BCL2L11. Interacts with host BAD and BBC3. Interacts with BALF1; BALF1 acting as a negative regulator of the survival function of BHRF1. Interacts with host BECN1.

Its subcellular location is the host membrane. The protein resides in the host mitochondrion. Functionally, prevents premature death of the host cell during virus production, which would otherwise reduce the amount of progeny virus. Acts as a host B-cell leukemia/lymphoma 2 (Bcl-2) homolog, and interacts with pro-apoptotic proteins to prevent mitochondria permeabilization, release of cytochrome c and subsequent apoptosis of the host cell. In addition, plays a role in the inhibiton of host BECN1-mediated starvation-induced autophagy without affecting basal levels of autophagy. The protein is Apoptosis regulator BHRF1 of Homo sapiens (Human).